Consider the following 545-residue polypeptide: Chaperonin GroEL 2 (545 aa).

ATP contacts are provided by residues 30 to 33 (TLGP), lysine 51, 87 to 91 (DGTTT), glycine 415, 479 to 481 (NAA), and aspartate 495.

It belongs to the chaperonin (HSP60) family. In terms of assembly, forms a cylinder of 14 subunits composed of two heptameric rings stacked back-to-back. Interacts with the co-chaperonin GroES.

The protein localises to the cytoplasm. It catalyses the reaction ATP + H2O + a folded polypeptide = ADP + phosphate + an unfolded polypeptide.. Together with its co-chaperonin GroES, plays an essential role in assisting protein folding. The GroEL-GroES system forms a nano-cage that allows encapsulation of the non-native substrate proteins and provides a physical environment optimized to promote and accelerate protein folding. In Escherichia coli O1:K1 / APEC, this protein is Chaperonin GroEL 2.